Consider the following 88-residue polypeptide: DNA-directed RNA polymerase subunit omega (88 aa).

This sequence belongs to the RNA polymerase subunit omega family. In terms of assembly, the RNAP catalytic core consists of 2 alpha, 1 beta, 1 beta' and 1 omega subunit. When a sigma factor is associated with the core the holoenzyme is formed, which can initiate transcription.

The enzyme catalyses RNA(n) + a ribonucleoside 5'-triphosphate = RNA(n+1) + diphosphate. Functionally, promotes RNA polymerase assembly. Latches the N- and C-terminal regions of the beta' subunit thereby facilitating its interaction with the beta and alpha subunits. This is DNA-directed RNA polymerase subunit omega from Actinobacillus succinogenes (strain ATCC 55618 / DSM 22257 / CCUG 43843 / 130Z).